Consider the following 398-residue polypeptide: Chalcone synthase 1 (398 aa).

Cysteine 167 is a catalytic residue.

Belongs to the thiolase-like superfamily. Chalcone/stilbene synthases family.

It carries out the reaction (E)-4-coumaroyl-CoA + 3 malonyl-CoA + 3 H(+) = 2',4,4',6'-tetrahydroxychalcone + 3 CO2 + 4 CoA. It participates in secondary metabolite biosynthesis; flavonoid biosynthesis. Functionally, the primary product of this enzyme is 4,2',4',6'-tetrahydroxychalcone (also termed naringenin-chalcone or chalcone) which can under specific conditions spontaneously isomerize into naringenin. This chain is Chalcone synthase 1 (CHS1), found in Gerbera hybrida (Daisy).